The chain runs to 445 residues: Serine/threonine-protein kinase Nek2 (445 aa).

Residues 8-271 (YEVLYTIGTG…VEEILENPLI (264 aa)) enclose the Protein kinase domain. Residues 14–22 (IGTGSYGRC) and K37 contribute to the ATP site. D141 acts as the Proton acceptor in catalysis. Phosphothreonine; by autocatalysis is present on T170. S171 is subject to Phosphoserine; by autocatalysis. 2 positions are modified to phosphothreonine; by autocatalysis: T175 and T179. Phosphoserine is present on S184. S241 is modified (phosphoserine; by autocatalysis). Positions 264–445 (EILENPLIAD…LKSRQILGMR (182 aa)) are interaction with PCNT. Residues S296 and S300 each carry the phosphoserine modification. An interaction with CEP85 region spans residues 301-445 (PVLSELKLKE…LKSRQILGMR (145 aa)). The stretch at 303 to 362 (LSELKLKEIQLQERERALKAREERLEQKEQELCVRERLAEDKLARAENLLKNYSLLKERK) forms a coiled coil. The interval 306 to 334 (LKLKEIQLQERERALKAREERLEQKEQEL) is leucine-zipper. A necessary for interaction with MAD1L1 region spans residues 329-445 (QKEQELCVRE…LKSRQILGMR (117 aa)). The segment at 333–370 (ELCVRERLAEDKLARAENLLKNYSLLKERKFLSLASNP) is required for microtubule binding and for localization to the centrosomes. Phosphoserine; by STK3/MST2 is present on residues S356 and S365. Phosphoserine is present on residues S387, S390, S397, and S402. The segment at 403–439 (QLTSKSKCKDLKKRLHAAQLRAQALSDIEKNYQLKSR) is interaction with SAV1 and STK3/MST2. Phosphoserine; by STK3/MST2 is present on S406. The stretch at 406–430 (SKSKCKDLKKRLHAAQLRAQALSDI) forms a coiled coil. Position 428 is a phosphoserine (S428). The residue at position 438 (S438) is a Phosphoserine; by STK3/MST2.

The protein belongs to the protein kinase superfamily. NEK Ser/Thr protein kinase family. NIMA subfamily. Isoform 1, isoform 2 and isoform 4 form homo- and heterodimers. Interacts with NECAB3 and HMGA2. Isoform 1 interacts with CDC20, CTNB1, MAD1L1, MAPK, NEK11, NPM1, NDC80, PCNT and SGO1. Isoform 1 interacts with STK3/MST2 (via SARAH domain) and SAV1 (via SARAH domain). Isoform 1 and isoform 2 interact with MAD2L1. Isoform 1 and isoform 4 interact with PPP1CA and PPP1CC. Interacts with CEP68; the interaction leads to phosphorylation of CEP68. Interacts with CNTLN; the interaction leads to phosphorylation of CNTLN. Isoform 1 interacts with CEP85. Interacts with CCDC102B; the interaction leads to phosphorylation of CCDC102B. Mg(2+) is required as a cofactor. Post-translationally, activated by autophosphorylation. Protein phosphatase 1 represses autophosphorylation and activation of isoform 1 by dephosphorylation. Phosphorylation by STK3/MST2 is necessary for its localization to the centrosome. In terms of tissue distribution, isoform 1 and isoform 2 are expressed in peripheral blood T-cells and a wide variety of transformed cell types. Isoform 1 and isoform 4 are expressed in the testis. Up-regulated in various cancer cell lines, as well as primary breast tumors.

It is found in the nucleus. The protein resides in the nucleolus. Its subcellular location is the cytoplasm. It localises to the cytoskeleton. The protein localises to the microtubule organizing center. It is found in the centrosome. The protein resides in the spindle pole. Its subcellular location is the chromosome. It localises to the centromere. The protein localises to the kinetochore. The enzyme catalyses L-seryl-[protein] + ATP = O-phospho-L-seryl-[protein] + ADP + H(+). It carries out the reaction L-threonyl-[protein] + ATP = O-phospho-L-threonyl-[protein] + ADP + H(+). Isoform 1 is inhibited by ionizing radiation in the presence of PPP1CA. Its catalytic activity is inhibited by the inhibitor CCT241950. In the presence of this inhibitor, displays an autoinhibited conformation: Tyr-70 side chain points into the active site, interacts with the activation loop, and blocks the alphaC helix. Functionally, protein kinase which is involved in the control of centrosome separation and bipolar spindle formation in mitotic cells and chromatin condensation in meiotic cells. Regulates centrosome separation (essential for the formation of bipolar spindles and high-fidelity chromosome separation) by phosphorylating centrosomal proteins such as CROCC, CEP250 and NINL, resulting in their displacement from the centrosomes. Regulates kinetochore microtubule attachment stability in mitosis via phosphorylation of NDC80. Involved in regulation of mitotic checkpoint protein complex via phosphorylation of CDC20 and MAD2L1. Plays an active role in chromatin condensation during the first meiotic division through phosphorylation of HMGA2. Phosphorylates: PPP1CC; SGO1; NECAB3 and NPM1. Essential for localization of MAD2L1 to kinetochore and MAPK1 and NPM1 to the centrosome. Phosphorylates CEP68 and CNTLN directly or indirectly. NEK2-mediated phosphorylation of CEP68 promotes CEP68 dissociation from the centrosome and its degradation at the onset of mitosis. Involved in the regulation of centrosome disjunction. Phosphorylates CCDC102B either directly or indirectly which causes CCDC102B to dissociate from the centrosome and allows for centrosome separation. Its function is as follows. Phosphorylates and activates NEK11 in G1/S-arrested cells. In terms of biological role, not present in the nucleolus and, in contrast to isoform 1, does not phosphorylate and activate NEK11 in G1/S-arrested cells. This chain is Serine/threonine-protein kinase Nek2 (NEK2), found in Homo sapiens (Human).